The primary structure comprises 579 residues: 2-isopropylmalate synthase (579 aa).

Residues 40–314 (PRWCAVDLRD…DPMIDFSDID (275 aa)) form the Pyruvate carboxyltransferase domain. Residues D49, H253, H255, and N289 each contribute to the Mg(2+) site. Residues 456 to 579 (SSKEDGQWGR…VNRAIRDAQA (124 aa)) form a regulatory domain region.

This sequence belongs to the alpha-IPM synthase/homocitrate synthase family. LeuA type 2 subfamily. Homodimer. Mg(2+) serves as cofactor.

The protein resides in the cytoplasm. It carries out the reaction 3-methyl-2-oxobutanoate + acetyl-CoA + H2O = (2S)-2-isopropylmalate + CoA + H(+). It functions in the pathway amino-acid biosynthesis; L-leucine biosynthesis; L-leucine from 3-methyl-2-oxobutanoate: step 1/4. Functionally, catalyzes the condensation of the acetyl group of acetyl-CoA with 3-methyl-2-oxobutanoate (2-ketoisovalerate) to form 3-carboxy-3-hydroxy-4-methylpentanoate (2-isopropylmalate). In Arthrobacter sp. (strain FB24), this protein is 2-isopropylmalate synthase.